Reading from the N-terminus, the 463-residue chain is Retinoic acid receptor RXR-gamma (463 aa).

The segment at 1-138 (MYGNYSHFMK…TSPGSLVKHI (138 aa)) is modulating. Residues 16 to 53 (GGSPGHTGSTSMSPSVALPTGKPMDSHPSYTDTPVSAP) are disordered. NR C4-type zinc fingers lie at residues 139–159 (CAIC…CEGC) and 175–199 (CRDN…YQKC). The segment at residues 139–204 (CAICGDRSSG…RYQKCLVMGM (66 aa)) is a DNA-binding region (nuclear receptor). The interval 205-230 (KREAVQEERQRSRERAESEAECASSS) is hinge. The span at 211–222 (EERQRSRERAES) shows a compositional bias: basic and acidic residues. The tract at residues 211–232 (EERQRSRERAESEAECASSSHE) is disordered. Residues 231–459 (HEDMPVERIL…SFLMEMLETP (229 aa)) form the NR LBD domain.

It belongs to the nuclear hormone receptor family. NR2 subfamily. In terms of assembly, homodimer. Heterodimer with a RAR molecule. Binds DNA preferentially as a RAR/RXR heterodimer. Interacts with RARA. Acetylated by EP300.

It is found in the nucleus. The protein resides in the cytoplasm. Functionally, receptor for retinoic acid. Retinoic acid receptors bind as heterodimers to their target response elements in response to their ligands, all-trans or 9-cis retinoic acid, and regulate gene expression in various biological processes. The RAR/RXR heterodimers bind to the retinoic acid response elements (RARE) composed of tandem 5'-AGGTCA-3' sites known as DR1-DR5. The high affinity ligand for RXRs is 9-cis retinoic acid. This chain is Retinoic acid receptor RXR-gamma (Rxrg), found in Mus musculus (Mouse).